The primary structure comprises 316 residues: Transaldolase (316 aa).

The active-site Schiff-base intermediate with substrate is Lys127.

It belongs to the transaldolase family. Type 2 subfamily.

It localises to the cytoplasm. The enzyme catalyses D-sedoheptulose 7-phosphate + D-glyceraldehyde 3-phosphate = D-erythrose 4-phosphate + beta-D-fructose 6-phosphate. The protein operates within carbohydrate degradation; pentose phosphate pathway; D-glyceraldehyde 3-phosphate and beta-D-fructose 6-phosphate from D-ribose 5-phosphate and D-xylulose 5-phosphate (non-oxidative stage): step 2/3. Its function is as follows. Transaldolase is important for the balance of metabolites in the pentose-phosphate pathway. The chain is Transaldolase from Helicobacter pylori (strain P12).